The chain runs to 200 residues: Elongation factor Ts (200 aa).

The involved in Mg(2+) ion dislocation from EF-Tu stretch occupies residues T83–A86.

Belongs to the EF-Ts family.

It localises to the cytoplasm. Associates with the EF-Tu.GDP complex and induces the exchange of GDP to GTP. It remains bound to the aminoacyl-tRNA.EF-Tu.GTP complex up to the GTP hydrolysis stage on the ribosome. The sequence is that of Elongation factor Ts from Syntrophobacter fumaroxidans (strain DSM 10017 / MPOB).